The sequence spans 545 residues: Methionine--tRNA ligase (545 aa).

A 'HIGH' region motif is present at residues 15 to 25 (PYANGPIHIGH). The Zn(2+) site is built by cysteine 146, cysteine 149, cysteine 159, and cysteine 162. Residues 332 to 336 (KLSKS) carry the 'KMSKS' region motif. Lysine 335 is a binding site for ATP.

The protein belongs to the class-I aminoacyl-tRNA synthetase family. MetG type 1 subfamily. Monomer. Requires Zn(2+) as cofactor.

It localises to the cytoplasm. It catalyses the reaction tRNA(Met) + L-methionine + ATP = L-methionyl-tRNA(Met) + AMP + diphosphate. Functionally, is required not only for elongation of protein synthesis but also for the initiation of all mRNA translation through initiator tRNA(fMet) aminoacylation. This chain is Methionine--tRNA ligase (metG), found in Buchnera aphidicola subsp. Schizaphis graminum (strain Sg).